Reading from the N-terminus, the 558-residue chain is Coiled-coil domain-containing protein 63 (558 aa).

A disordered region spans residues 1–26 (MPTKKHRRKDPESPQEPSEKTKEQLV). Basic and acidic residues predominate over residues 9-26 (KDPESPQEPSEKTKEQLV). Coiled-coil stretches lie at residues 48–289 (NFRS…KAKK) and 339–416 (VTEL…VENL). The tract at residues 531–558 (HYATRESRNRDSMPEKGDELKSKKKVTV) is disordered. Residues 533–551 (ATRESRNRDSMPEKGDELK) show a composition bias toward basic and acidic residues.

Its function is as follows. Plays a role in spermiogenesis. Involved in the elongation of flagella and the formation of sperm heads. The protein is Coiled-coil domain-containing protein 63 of Bos taurus (Bovine).